The following is a 1072-amino-acid chain: DNA-directed RNA polymerase subunit beta (1072 aa).

This sequence belongs to the RNA polymerase beta chain family. In terms of assembly, in plastids the minimal PEP RNA polymerase catalytic core is composed of four subunits: alpha, beta, beta', and beta''. When a (nuclear-encoded) sigma factor is associated with the core the holoenzyme is formed, which can initiate transcription.

Its subcellular location is the plastid. The protein resides in the chloroplast. The enzyme catalyses RNA(n) + a ribonucleoside 5'-triphosphate = RNA(n+1) + diphosphate. DNA-dependent RNA polymerase catalyzes the transcription of DNA into RNA using the four ribonucleoside triphosphates as substrates. The chain is DNA-directed RNA polymerase subunit beta from Oenothera elata subsp. hookeri (Hooker's evening primrose).